The following is a 227-amino-acid chain: Uracil-DNA glycosylase (227 aa).

The Proton acceptor role is filled by aspartate 68.

Belongs to the uracil-DNA glycosylase (UDG) superfamily. UNG family.

The protein localises to the cytoplasm. The catalysed reaction is Hydrolyzes single-stranded DNA or mismatched double-stranded DNA and polynucleotides, releasing free uracil.. In terms of biological role, excises uracil residues from the DNA which can arise as a result of misincorporation of dUMP residues by DNA polymerase or due to deamination of cytosine. The chain is Uracil-DNA glycosylase from Mycobacterium avium (strain 104).